The chain runs to 427 residues: Septin-8-A (427 aa).

The region spanning 39–305 is the Septin-type G domain; that stretch reads QGFCFNILCV…ELYRRCKLEE (267 aa). Positions 49-56 are G1 motif; that stretch reads GETGIGKS. GTP is bound by residues 49 to 56, G104, 185 to 193, G239, and R254; these read GETGIGKS and KADTISKSE. Residues 101 to 104 are G3 motif; sequence DTVG. Residues 184-187 are G4 motif; sequence AKAD. The stretch at 320-409 forms a coiled coil; the sequence is LQETYEAKRK…KAAMEALQSQ (90 aa). Positions 376-389 are enriched in basic and acidic residues; sequence QEESKKVEDKRRDL. Positions 376–427 are disordered; sequence QEESKKVEDKRRDLEEEMNSFNRRKAAMEALQSQSFQATSQQPLKKDKDRKN. Positions 406–418 are enriched in polar residues; that stretch reads LQSQSFQATSQQP.

It belongs to the TRAFAC class TrmE-Era-EngA-EngB-Septin-like GTPase superfamily. Septin GTPase family.

In Xenopus laevis (African clawed frog), this protein is Septin-8-A (sept8-a).